The sequence spans 231 residues: Homeobox protein engrailed-1a (231 aa).

Disordered stretches follow at residues 1–29, 43–105, and 121–148; these read MEDQ…AHRN, GCKR…KDSQ, and DRPS…RPRT. The span at 43–56 shows a compositional bias: basic and acidic residues; that stretch reads GCKRERERVTRDSG. The segment covering 68 to 102 has biased composition (low complexity); it reads DGVSSSASSTVSSPVSSRQSNKVEQGSSKSSSPSK. Residues 143 to 202 constitute a DNA-binding region (homeobox); sequence DKRPRTAFTAEQLQRLKAEFQTSRYITEQRRQALARELGLNESQIKIWFQNKRAKIKKSS.

This sequence belongs to the engrailed homeobox family.

It is found in the nucleus. This is Homeobox protein engrailed-1a (eng1a) from Danio rerio (Zebrafish).